A 326-amino-acid chain; its full sequence is Putative GTPase CC_2483 (326 aa).

GTP is bound by residues 61 to 69 (GVPGAGKST), D203, and 238 to 240 (SGL).

This sequence belongs to the SIMIBI class G3E GTPase family. ArgK/MeaB subfamily.

In terms of biological role, may have GTPase activity. May also bind and hydrolyze ATP. May function as chaperone. This is Putative GTPase CC_2483 from Caulobacter vibrioides (strain ATCC 19089 / CIP 103742 / CB 15) (Caulobacter crescentus).